The chain runs to 594 residues: 4-alpha-glucanotransferase DPE1, chloroplastic/amyloplastic (594 aa).

The N-terminal 37 residues, 1–37 (MATLSLPLPHLTQAIPARARPRPRPLRGIPARLLSCR), are a transit peptide targeting the chloroplast.

It belongs to the disproportionating enzyme family.

The protein localises to the plastid. It localises to the chloroplast. It is found in the amyloplast. It catalyses the reaction Transfers a segment of a (1-&gt;4)-alpha-D-glucan to a new position in an acceptor, which may be glucose or a (1-&gt;4)-alpha-D-glucan.. In terms of biological role, chloroplastic alpha-glucanotransferase involved in maltotriose metabolism. The sequence is that of 4-alpha-glucanotransferase DPE1, chloroplastic/amyloplastic (DPE1) from Oryza sativa subsp. japonica (Rice).